A 34-amino-acid polypeptide reads, in one-letter code: Antimicrobial peptide Alo-1 (34 aa).

3 disulfides stabilise this stretch: Cys1/Cys18, Cys8/Cys22, and Cys17/Cys33.

It localises to the secreted. Its function is as follows. Has antifungal activity against C.glabrata. The protein is Antimicrobial peptide Alo-1 of Acrocinus longimanus (Giant harlequin beetle).